A 310-amino-acid chain; its full sequence is Dopamine receptor-interacting protein 1 (310 aa).

Interacts with DRD1.

Could be a regulator of the dopamine receptor signaling pathway. In Homo sapiens (Human), this protein is Dopamine receptor-interacting protein 1.